Consider the following 265-residue polypeptide: MKSFVLFAACMAIIALGSLAHAYPQKLPVPIPPPSNPPVAVLQNSVATNSKGGQDVSVKLSATNLGNNHVQPIAEVFAEGNTKGGNVLRGATVGVQGHGLGASVTKTQTDTKIKGLDFQPQLSSSTLALQGDRLGASISRDVNRGVSDTFTKSVSANVFRNDNHNLDATVFRSDVRQNNGFNFQKTGGMLDYSHANGHGLNAGLTHFSGIGNQANVGGSSTLFKSNDGSLSLKANAGGSQWLSGPFSNQRDYNVGLSLTHHGCGG.

Residues 1–22 (MKSFVLFAACMAIIALGSLAHA) form the signal peptide. Residues 23–24 (YP) constitute a propeptide, removed by a dipeptidylpeptidase. Glutamine 25 carries the post-translational modification Pyrrolidone carboxylic acid. Glycine amide is present on glycine 264.

It belongs to the attacin/sarcotoxin-2 family. Synthesized by the fat body and is eventually secreted into the hemolymph.

Its subcellular location is the secreted. Sarcotoxin II is an antibacterial protein which plays a role in the inflammatory response of this insect. The main effect of sarcotoxin II on E.coli may be the inhibition of cell wall synthesis, including septum formation. The polypeptide is Sarcotoxin II-1 (Sarcophaga peregrina (Flesh fly)).